Consider the following 289-residue polypeptide: Oxaloacetate decarboxylase (289 aa).

Ser-50 serves as a coordination point for substrate. Residue Asp-88 coordinates Mg(2+). Substrate contacts are provided by Arg-159 and His-235.

Belongs to the isocitrate lyase/PEP mutase superfamily. Oxaloacetate decarboxylase family. In terms of assembly, homotetramer; dimer of dimers. The cofactor is Mg(2+).

The enzyme catalyses oxaloacetate + H(+) = pyruvate + CO2. Catalyzes the decarboxylation of oxaloacetate into pyruvate. Seems to play a role in maintaining cellular concentrations of bicarbonate and pyruvate. The polypeptide is Oxaloacetate decarboxylase (Pseudomonas putida (strain GB-1)).